A 342-amino-acid polypeptide reads, in one-letter code: Probable long-chain-alcohol O-fatty-acyltransferase 3 (342 aa).

A run of 8 helical transmembrane segments spans residues 9-29, 36-56, 58-78, 115-135, 153-173, 227-247, 255-275, and 297-317; these read IKLW…STGI, LLSV…FSYV, FSGC…ILFS, IPIW…QMYE, IFLE…ITLG, MFLG…MLFF, TGEV…EVAV, and VGFV…SGII.

It belongs to the wax synthase family.

The protein localises to the membrane. It catalyses the reaction a long chain fatty alcohol + a fatty acyl-CoA = a wax ester + CoA. Catalyzes the final step in the synthesis of long-chain linear esters (waxes). The sequence is that of Probable long-chain-alcohol O-fatty-acyltransferase 3 (AT3) from Arabidopsis thaliana (Mouse-ear cress).